The primary structure comprises 570 residues: Carotenoid cleavage dioxygenase 8, chloroplastic (570 aa).

The N-terminal 56 residues, 1-56 (MASLITTKAMMSHHHVLSSTRITTLYSDNSIGDQQIKTKPQVPHRLFARRIFGVTR), are a transit peptide targeting the chloroplast. Residues histidine 254, histidine 305, histidine 372, and histidine 563 each coordinate Fe cation.

Belongs to the carotenoid oxygenase family. Fe(2+) is required as a cofactor. In terms of tissue distribution, expressed in flowers, siliques, inflorescence stems, petiole and leaves, and at a much higher level in roots.

It localises to the plastid. Its subcellular location is the chloroplast. The enzyme catalyses 9-cis-10'-apo-beta-carotenal + 2 O2 = (2E,4E,6E)-7-hydroxy-4-methylhepta-2,4,6-trienal + (11R)-carlactone. It catalyses the reaction all-trans-10'-apo-beta-carotenal + O2 = (2E,4E,6E)-4-methylocta-2,4,6-trienedial + 13-apo-beta-carotenone. Involved in strigolactones biosynthesis by cleaving the C(27) 9-cis-10'-apo-beta-carotenal produced by CCD7. Produces the C(19) carlactone and a C(8) hydroxyaldehyde. Also shows lower activity with all-trans-10'-apo-beta-carotenal producing a C(9) dialdehyde and the C(18) 13-apo-beta-carotenone. Strigolactones are hormones that inhibit tillering and shoot branching through the MAX-dependent pathway, contribute to the regulation of shoot architectural response to phosphate-limiting conditions and function as rhizosphere signal that stimulates hyphal branching of arbuscular mycorrhizal fungi and trigger seed germination of root parasitic weeds. Also active on other carotenoid substrates like licopene or zeaxanthin. The polypeptide is Carotenoid cleavage dioxygenase 8, chloroplastic (Arabidopsis thaliana (Mouse-ear cress)).